The following is a 930-amino-acid chain: Translation initiation factor IF-2 (930 aa).

The span at 50–67 shows a compositional bias: low complexity; it reads FKPAAAPKVEAKPAAPKV. 2 disordered regions span residues 50-217 and 260-346; these read FKPA…SSEE and EVVP…HELP. 2 stretches are compositionally biased toward basic and acidic residues: residues 68 to 90 and 110 to 125; these read SAEK…EAKP and FKAE…AERR. Over residues 129 to 141 the composition is skewed to low complexity; it reads KGNNRDQQQNGNR. Basic and acidic residues-rich tracts occupy residues 157-167 and 262-295; these read RDNRRFNDQAK and VPEK…DGPR. Residues 309–318 are compositionally biased toward low complexity; sequence NQKNSNWNNN. Positions 337-346 are enriched in basic and acidic residues; that stretch reads VTERKFHELP. Positions 432–599 constitute a tr-type G domain; that stretch reads ERPPVVTIMG…TVLLVAEIQE (168 aa). Positions 441-448 are G1; it reads GHVDHGKT. 441-448 is a binding site for GTP; the sequence is GHVDHGKT. The interval 466-470 is G2; the sequence is GITQH. Residues 487–490 form a G3 region; it reads DTPG. Residues 487–491 and 541–544 each bind GTP; these read DTPGH and NKID. The G4 stretch occupies residues 541–544; the sequence is NKID. Residues 577 to 579 are G5; the sequence is SAK.

Belongs to the TRAFAC class translation factor GTPase superfamily. Classic translation factor GTPase family. IF-2 subfamily.

It localises to the cytoplasm. One of the essential components for the initiation of protein synthesis. Protects formylmethionyl-tRNA from spontaneous hydrolysis and promotes its binding to the 30S ribosomal subunits. Also involved in the hydrolysis of GTP during the formation of the 70S ribosomal complex. This chain is Translation initiation factor IF-2, found in Streptococcus pneumoniae (strain ATCC 700669 / Spain 23F-1).